Reading from the N-terminus, the 364-residue chain is Aminomethyltransferase (364 aa).

It belongs to the GcvT family. In terms of assembly, the glycine cleavage system is composed of four proteins: P, T, L and H.

The enzyme catalyses N(6)-[(R)-S(8)-aminomethyldihydrolipoyl]-L-lysyl-[protein] + (6S)-5,6,7,8-tetrahydrofolate = N(6)-[(R)-dihydrolipoyl]-L-lysyl-[protein] + (6R)-5,10-methylene-5,6,7,8-tetrahydrofolate + NH4(+). Its function is as follows. The glycine cleavage system catalyzes the degradation of glycine. This is Aminomethyltransferase from Thermotoga maritima (strain ATCC 43589 / DSM 3109 / JCM 10099 / NBRC 100826 / MSB8).